A 32-amino-acid polypeptide reads, in one-letter code: U3-theraphotoxin-Hhn1r (32 aa).

3 disulfide bridges follow: Cys-2-Cys-15, Cys-9-Cys-20, and Cys-14-Cys-27.

It belongs to the neurotoxin 10 (Hwtx-1) family. 16 (Hntx-8) subfamily. In terms of tissue distribution, expressed by the venom gland.

The protein resides in the secreted. Functionally, ion channel inhibitor. This chain is U3-theraphotoxin-Hhn1r, found in Cyriopagopus hainanus (Chinese bird spider).